Reading from the N-terminus, the 916-residue chain is Nonsense-mediated mRNA decay factor SMG8 (916 aa).

The interval 566 to 626 (LENSNRTPDT…KNYASQGDAD (61 aa)) is disordered. The span at 589–604 (LSGSQKSQDSASNLTF) shows a compositional bias: polar residues.

Belongs to the SMG8 family.

Functionally, involved in nonsense-mediated decay (NMD) of mRNAs containing premature stop codons. Probable component of kinase complex containing SMG1 and recruited to stalled ribosomes. This is Nonsense-mediated mRNA decay factor SMG8 from Aedes aegypti (Yellowfever mosquito).